Consider the following 569-residue polypeptide: Urease subunit beta (569 aa).

Residues 131–569 form the Urease domain; sequence GGIDTHIHFI…LSLAQLYNLF (439 aa). 3 residues coordinate Ni(2+): histidine 136, histidine 138, and lysine 219. An N6-carboxylysine modification is found at lysine 219. Histidine 221 contributes to the substrate binding site. Histidine 248 and histidine 274 together coordinate Ni(2+). Residue histidine 322 is the Proton donor of the active site. Aspartate 362 lines the Ni(2+) pocket.

This sequence belongs to the metallo-dependent hydrolases superfamily. Urease alpha subunit family. As to quaternary structure, heterohexamer of 3 UreA (alpha) and 3 UreB (beta) subunits. Requires Ni cation as cofactor. Post-translationally, carboxylation allows a single lysine to coordinate two nickel ions.

The protein localises to the cytoplasm. The catalysed reaction is urea + 2 H2O + H(+) = hydrogencarbonate + 2 NH4(+). It participates in nitrogen metabolism; urea degradation; CO(2) and NH(3) from urea (urease route): step 1/1. The polypeptide is Urease subunit beta (Helicobacter felis (strain ATCC 49179 / CCUG 28539 / NCTC 12436 / CS1)).